A 371-amino-acid chain; its full sequence is Alanine dehydrogenase (371 aa).

Residues Arg-15 and Lys-75 each contribute to the substrate site. His-96 (proton donor/acceptor) is an active-site residue. NAD(+) contacts are provided by residues Ser-134, Asp-198, Arg-203, Ser-220, 239-240 (VL), 267-270 (VAID), Lys-279, and 298-301 (VANM). Asp-270 functions as the Proton donor/acceptor in the catalytic mechanism.

The protein belongs to the AlaDH/PNT family. Mg(2+) is required as a cofactor.

It carries out the reaction L-alanine + NAD(+) + H2O = pyruvate + NH4(+) + NADH + H(+). It functions in the pathway amino-acid degradation; L-alanine degradation via dehydrogenase pathway; NH(3) and pyruvate from L-alanine: step 1/1. Functionally, catalyzes the reversible reductive amination of pyruvate to L-alanine. This is Alanine dehydrogenase from Halomonas elongata (strain ATCC 33173 / DSM 2581 / NBRC 15536 / NCIMB 2198 / 1H9).